The sequence spans 423 residues: 26S proteasome regulatory subunit 6A-A (423 aa).

211–218 (GPPGTGKT) contacts ATP.

Belongs to the AAA ATPase family. May form a heterodimer with a related family member.

It localises to the cytoplasm. It is found in the nucleus. In terms of biological role, the 26S proteasome is involved in the ATP-dependent degradation of ubiquitinated proteins. The regulatory (or ATPase) complex confers ATP dependency and substrate specificity to the 26S complex. The protein is 26S proteasome regulatory subunit 6A-A of Xenopus laevis (African clawed frog).